The chain runs to 306 residues: Oxygen-dependent coproporphyrinogen-III oxidase (306 aa).

Residue Ser94 participates in substrate binding. Residues His98 and His108 each contribute to the a divalent metal cation site. The Proton donor role is filled by His108. 110 to 112 (NVR) is a substrate binding site. 2 residues coordinate a divalent metal cation: His147 and His177. Positions 242–277 (YVEFNLVYDRGTLFGLQTGGRTESILMSMPPLVRWQ) are important for dimerization. 260–262 (GGR) contributes to the substrate binding site.

It belongs to the aerobic coproporphyrinogen-III oxidase family. As to quaternary structure, homodimer. Requires a divalent metal cation as cofactor.

It is found in the cytoplasm. The catalysed reaction is coproporphyrinogen III + O2 + 2 H(+) = protoporphyrinogen IX + 2 CO2 + 2 H2O. The protein operates within porphyrin-containing compound metabolism; protoporphyrin-IX biosynthesis; protoporphyrinogen-IX from coproporphyrinogen-III (O2 route): step 1/1. Functionally, involved in the heme biosynthesis. Catalyzes the aerobic oxidative decarboxylation of propionate groups of rings A and B of coproporphyrinogen-III to yield the vinyl groups in protoporphyrinogen-IX. The protein is Oxygen-dependent coproporphyrinogen-III oxidase of Shewanella sediminis (strain HAW-EB3).